We begin with the raw amino-acid sequence, 187 residues long: Large ribosomal subunit protein uL22B (187 aa).

The protein belongs to the universal ribosomal protein uL22 family. In terms of assembly, component of the large ribosomal subunit (LSU). Mature yeast ribosomes consist of a small (40S) and a large (60S) subunit. The 40S small subunit contains 1 molecule of ribosomal RNA (18S rRNA) and at least 33 different proteins. The large 60S subunit contains 3 rRNA molecules (25S, 5.8S and 5S rRNA) and at least 46 different proteins. uL22 is associated with the polypeptide exit tunnel.

It localises to the cytoplasm. Functionally, component of the ribosome, a large ribonucleoprotein complex responsible for the synthesis of proteins in the cell. The small ribosomal subunit (SSU) binds messenger RNAs (mRNAs) and translates the encoded message by selecting cognate aminoacyl-transfer RNA (tRNA) molecules. The large subunit (LSU) contains the ribosomal catalytic site termed the peptidyl transferase center (PTC), which catalyzes the formation of peptide bonds, thereby polymerizing the amino acids delivered by tRNAs into a polypeptide chain. The nascent polypeptides leave the ribosome through a tunnel in the LSU and interact with protein factors that function in enzymatic processing, targeting, and the membrane insertion of nascent chains at the exit of the ribosomal tunnel. The polypeptide is Large ribosomal subunit protein uL22B (rpl1702) (Schizosaccharomyces pombe (strain 972 / ATCC 24843) (Fission yeast)).